We begin with the raw amino-acid sequence, 278 residues long: Endoplasmic reticulum junction formation protein lunapark (278 aa).

Residues 1–45 (MFSALGKWVRGSRNDKDFVTKYTADLSQITSQIHQLDVALKKSQS) lie on the Cytoplasmic side of the membrane. Residues 46 to 66 (ILSQWQSNLTFYGIALTVLAL) form a helical membrane-spanning segment. Topologically, residues 67-77 (SYTYWEYHGYR) are lumenal. A helical membrane pass occupies residues 78–98 (PYLVVTALLCIGSLILFKWAL). Topologically, residues 99-278 (TKLYAFYNNN…PSQSEKEKTK (180 aa)) are cytoplasmic. A coiled-coil region spans residues 107 to 183 (NNRLRKLAKL…ELEKFKKESH (77 aa)). The C4-type; plays a role in ER morphology zinc-finger motif lies at 223–247 (CPQCHWKSNCYRLASKPIIFICPHC). A disordered region spans residues 258 to 278 (EDAIEAKQPAQPSQSEKEKTK).

Belongs to the lunapark family. In terms of assembly, interacts with RTN1; this interaction is negatively regulated by SEY1. Interacts with SEY1 and YOP1.

Its subcellular location is the endoplasmic reticulum membrane. Its function is as follows. Plays a role in tubular endoplasmic reticulum network formation and maintenance. Works in conjunction with the ER shaping proteins (reticulons RTN1 and RTN2, YOP1), and in antagonism to SEY1 to maintain the network in a dynamic equilibrium. May counterbalance SEY1-directed polygon formation by promoting polygon loss through ring closure. This Saccharomyces cerevisiae (strain ATCC 204508 / S288c) (Baker's yeast) protein is Endoplasmic reticulum junction formation protein lunapark (LNP1).